Reading from the N-terminus, the 455-residue chain is Nuclear mRNA export protein THP1 (455 aa).

A PCI domain is found at 220 to 431 (IEYRYLLGRY…QLCVVKKTTM (212 aa)).

In terms of assembly, heterodimer with THP1. The SAC3-THP1 complex interacts with CDC31 and SUS1, and with the mRNA export factor MEX67-MTR2, the TREX complex component SUB2, and the nucleoporin NUP1.

Its subcellular location is the nucleus envelope. Its function is as follows. Component of the SAC3-THP1 complex, which functions in transcription-coupled mRNA export from the nucleus to the cytoplasm. SAC3-THP1 functions in docking export-competent ribonucleoprotein particles (mRNPs) to the nuclear entrance of the nuclear pore complex (nuclear basket), by association with components of the nuclear mRNA export machinery (MEX67-MTR2 and SUB2) in the nucleoplasm and the nucleoporin NUP1 at the nuclear basket. THP1 binds to RNA in vitro. This chain is Nuclear mRNA export protein THP1 (THP1), found in Saccharomyces cerevisiae (strain ATCC 204508 / S288c) (Baker's yeast).